The chain runs to 388 residues: LL-diaminopimelate aminotransferase (388 aa).

Substrate-binding residues include Tyr-13, Gly-38, Lys-102, Tyr-126, and Asn-176. Residues 101–102 (SK), Tyr-126, Asn-176, Tyr-207, and 235–237 (SLS) each bind pyridoxal 5'-phosphate. An N6-(pyridoxal phosphate)lysine modification is found at Lys-238. A pyridoxal 5'-phosphate-binding site is contributed by Arg-246. Substrate is bound at residue Arg-364.

It belongs to the class-I pyridoxal-phosphate-dependent aminotransferase family. LL-diaminopimelate aminotransferase subfamily. As to quaternary structure, homodimer. It depends on pyridoxal 5'-phosphate as a cofactor.

The catalysed reaction is (2S,6S)-2,6-diaminopimelate + 2-oxoglutarate = (S)-2,3,4,5-tetrahydrodipicolinate + L-glutamate + H2O + H(+). Its pathway is amino-acid biosynthesis; L-lysine biosynthesis via DAP pathway; LL-2,6-diaminopimelate from (S)-tetrahydrodipicolinate (aminotransferase route): step 1/1. Its function is as follows. Involved in the synthesis of meso-diaminopimelate (m-DAP or DL-DAP), required for both lysine and peptidoglycan biosynthesis. Catalyzes the direct conversion of tetrahydrodipicolinate to LL-diaminopimelate. The polypeptide is LL-diaminopimelate aminotransferase (Dehalococcoides mccartyi (strain ATCC BAA-2100 / JCM 16839 / KCTC 5957 / BAV1)).